Reading from the N-terminus, the 492-residue chain is MTTTETSLSADTKNGIDFKIADLSLADFGRKELRIAEHEMPGLMSLRREYAEVQPLKGARISGSLHMTVQTAVLIETLTALGAEVRWASCNIFSTQDHAAAAVVVGPHGTPEEPKGVPVFAWKGESLEEYWWCAEQMLTWPDSDKPANMILDDGGDATMLVLRGMQYEKAGVVPPAEEDDSAEWKVFLGLLRSRFETDKGKWTKIAESVKGVTEETTTGVLRLYQFAAAGDLAFPAINVNDSVTKSKFDNKYGTRHSLIDGINRGTDALIGGKKVLICGYGDVGKGCAEAMKGQGARVSVTEIDPINALQAMMEGFDVVTVEDAIGDADIVVTSTGNKDIIMLEHIKAMKDHSILGNIGHFDNEIDMAGLERSGATRTNIKPQVDLWTFGDTGRSIIVLSEGRLLNLGNATGHPSFVMSNSFANQTIAQIELWTKNDEYDNEVYRLPKHLDEKVARIHVEALGGRLTKLTKDQAEYLGVDVEGPYKPDHYRY.

Threonine 68, aspartate 153, and glutamate 215 together coordinate substrate. An NAD(+)-binding site is contributed by 216–218 (TTT). 2 residues coordinate substrate: lysine 245 and aspartate 249. NAD(+) contacts are provided by residues asparagine 250, 279 to 284 (GYGDVG), glutamate 302, asparagine 337, 358 to 360 (IGH), and asparagine 406.

Belongs to the adenosylhomocysteinase family. Requires NAD(+) as cofactor.

The protein localises to the cytoplasm. The catalysed reaction is S-adenosyl-L-homocysteine + H2O = L-homocysteine + adenosine. It participates in amino-acid biosynthesis; L-homocysteine biosynthesis; L-homocysteine from S-adenosyl-L-homocysteine: step 1/1. Its function is as follows. May play a key role in the regulation of the intracellular concentration of adenosylhomocysteine. The polypeptide is Adenosylhomocysteinase (Mycobacterium marinum (strain ATCC BAA-535 / M)).